Consider the following 697-residue polypeptide: Phosphate acetyltransferase (697 aa).

Positions leucine 374 to lysine 697 are phosphate acetyltransferase.

The protein in the N-terminal section; belongs to the CobB/CobQ family. In the C-terminal section; belongs to the phosphate acetyltransferase and butyryltransferase family.

The protein resides in the cytoplasm. The enzyme catalyses acetyl-CoA + phosphate = acetyl phosphate + CoA. It participates in metabolic intermediate biosynthesis; acetyl-CoA biosynthesis; acetyl-CoA from acetate: step 2/2. Functionally, involved in acetate metabolism. In Synechocystis sp. (strain ATCC 27184 / PCC 6803 / Kazusa), this protein is Phosphate acetyltransferase (pta).